Here is a 199-residue protein sequence, read N- to C-terminus: Charged multivesicular body protein 1b (199 aa).

2 coiled-coil regions span residues asparagine 10–alanine 48 and threonine 178–valine 199. Residues glutamate 167–valine 199 are disordered. The span at glutamine 170 to serine 182 shows a compositional bias: polar residues. Positions aspartate 186 to arginine 196 match the MIT-interacting motif motif.

It belongs to the SNF7 family. As to quaternary structure, probable peripherally associated component of the endosomal sorting required for transport complex III (ESCRT-III).

The protein localises to the cytoplasm. The protein resides in the cytosol. Its subcellular location is the endosome. It is found in the late endosome membrane. Functionally, probable peripherally associated component of the endosomal sorting required for transport complex III (ESCRT-III) which is involved in multivesicular bodies (MVBs) formation and sorting of endosomal cargo proteins into MVBs. MVBs contain intraluminal vesicles (ILVs) that are generated by invagination and scission from the limiting membrane of the endosome and mostly are delivered to lysosomes enabling degradation of membrane proteins, such as stimulated growth factor receptors, lysosomal enzymes and lipids. This Gallus gallus (Chicken) protein is Charged multivesicular body protein 1b (CHMP1B).